A 237-amino-acid polypeptide reads, in one-letter code: (5-formylfuran-3-yl)methyl phosphate synthase (237 aa).

Residue lysine 29 is the Schiff-base intermediate with substrate of the active site. Lysine 87 (proton acceptor) is an active-site residue.

It belongs to the MfnB family.

The catalysed reaction is 2 D-glyceraldehyde 3-phosphate = 4-(hydroxymethyl)-2-furancarboxaldehyde phosphate + phosphate + 2 H2O. It functions in the pathway cofactor biosynthesis; methanofuran biosynthesis. In terms of biological role, catalyzes the formation of 4-(hydroxymethyl)-2-furancarboxaldehyde phosphate (4-HFC-P) from two molecules of glyceraldehyde-3-P (GA-3-P). The sequence is that of (5-formylfuran-3-yl)methyl phosphate synthase from Methanopyrus kandleri (strain AV19 / DSM 6324 / JCM 9639 / NBRC 100938).